A 142-amino-acid chain; its full sequence is Large ribosomal subunit protein uL11 (142 aa).

Belongs to the universal ribosomal protein uL11 family. Part of the ribosomal stalk of the 50S ribosomal subunit. Interacts with L10 and the large rRNA to form the base of the stalk. L10 forms an elongated spine to which L12 dimers bind in a sequential fashion forming a multimeric L10(L12)X complex. Post-translationally, one or more lysine residues are methylated.

In terms of biological role, forms part of the ribosomal stalk which helps the ribosome interact with GTP-bound translation factors. The chain is Large ribosomal subunit protein uL11 from Pseudoalteromonas atlantica (strain T6c / ATCC BAA-1087).